The following is a 912-amino-acid chain: Probable transmembrane GTPase FZO-like, chloroplastic (912 aa).

The transit peptide at 1 to 54 (MRTLISHRQCVTSPFLISAASPPFPGRCFKLSSFTPPRHRRFSSLSIRNISHES) directs the protein to the chloroplast. A disordered region spans residues 51 to 71 (SHESADQTSSSRPRTLYPGGY). The Stromal segment spans residues 55–773 (ADQTSSSRPR…SKRLEQDIRE (719 aa)). GTP contacts are provided by residues 359–364 (NSGKST) and Ser-521. The chain crosses the membrane as a helical span at residues 774–794 (VFFVTVGGLGAAGLSASLLTS). At 795 to 801 (VLPTTLE) the chain is on the chloroplast intermembrane side. Residues 802–822 (DLLALGLCSAGGYVAIANFPY) form a helical membrane-spanning segment. Residues 823-912 (RRQAIIGKVN…LHVSRDEMRL (90 aa)) are Stromal-facing. Residues 877–904 (DRLLGIQKELSDIRSKLQLLQVDIDNLH) adopt a coiled-coil conformation.

Belongs to the TRAFAC class dynamin-like GTPase superfamily. Dynamin/Fzo/YdjA family. Mitofusin subfamily.

Its subcellular location is the plastid. The protein localises to the chloroplast inner membrane. The protein resides in the chloroplast thylakoid membrane. In terms of biological role, probable membrane-remodeling GTPase that plays a unique role in the in the determination of thylakoid and chloroplast morphology and regulates organization of the thylakoid network. Not involved in the determination of mitochondrial morphology or ultrastructure. This Arabidopsis thaliana (Mouse-ear cress) protein is Probable transmembrane GTPase FZO-like, chloroplastic.